A 434-amino-acid polypeptide reads, in one-letter code: Putative G3BP-like protein (434 aa).

One can recognise an NTF2 domain in the interval 18 to 134 (IGWMFVQEYY…YFVLNDIFRF (117 aa)). 2 disordered regions span residues 141-180 (EEEESPDAVEKEKKDVASEPYVNGVQSQEHLPSAKEEGHY) and 274-308 (VKSQASVSSTASTTGQTVKGVNADQTQQPTAPYTQ). The residue at position 145 (Ser-145) is a Phosphoserine. Basic and acidic residues predominate over residues 148-157 (AVEKEKKDVA). Over residues 276–291 (SQASVSSTASTTGQTV) the composition is skewed to low complexity. Polar residues predominate over residues 296–308 (ADQTQQPTAPYTQ). The RRM domain occupies 315-386 (TSVFVKNIPP…ATLNIEERRR (72 aa)). The interval 390 to 434 (GKFNKSGDKKSNDNYNGMKRNFRKGNRGAFDGRSKEVTTSKKQNN) is disordered. Positions 419-428 (FDGRSKEVTT) are enriched in basic and acidic residues.

Functionally, probable scaffold protein that may be involved in mRNA transport. In Schizosaccharomyces pombe (strain 972 / ATCC 24843) (Fission yeast), this protein is Putative G3BP-like protein (nxt3).